Here is a 184-residue protein sequence, read N- to C-terminus: ATP-dependent protease subunit HslV (184 aa).

Residue Thr12 is part of the active site. Residues Ala166, Cys169, and Thr172 each contribute to the Na(+) site.

The protein belongs to the peptidase T1B family. HslV subfamily. A double ring-shaped homohexamer of HslV is capped on each side by a ring-shaped HslU homohexamer. The assembly of the HslU/HslV complex is dependent on binding of ATP.

The protein resides in the cytoplasm. The enzyme catalyses ATP-dependent cleavage of peptide bonds with broad specificity.. Its activity is regulated as follows. Allosterically activated by HslU binding. Functionally, protease subunit of a proteasome-like degradation complex believed to be a general protein degrading machinery. The protein is ATP-dependent protease subunit HslV of Brucella abortus (strain S19).